The sequence spans 203 residues: Xrcc4-like factor 1 (203 aa).

This sequence belongs to the XRCC4-XLF family. XLF subfamily.

It is found in the nucleus. Functionally, involved in double-strand break repair via non-homologous end joining (NHEJ); the repair of a double-strand break in DNA in which the two broken ends are rejoined with little or no sequence complementarity. Has a role in meiosis. The polypeptide is Xrcc4-like factor 1 (xlf1) (Schizosaccharomyces pombe (strain 972 / ATCC 24843) (Fission yeast)).